Reading from the N-terminus, the 471-residue chain is ATP synthase subunit beta (471 aa).

156-163 (GGAGVGKT) is a binding site for ATP.

Belongs to the ATPase alpha/beta chains family. In terms of assembly, F-type ATPases have 2 components, CF(1) - the catalytic core - and CF(0) - the membrane proton channel. CF(1) has five subunits: alpha(3), beta(3), gamma(1), delta(1), epsilon(1). CF(0) has three main subunits: a(1), b(2) and c(9-12). The alpha and beta chains form an alternating ring which encloses part of the gamma chain. CF(1) is attached to CF(0) by a central stalk formed by the gamma and epsilon chains, while a peripheral stalk is formed by the delta and b chains.

The protein resides in the cell membrane. The catalysed reaction is ATP + H2O + 4 H(+)(in) = ADP + phosphate + 5 H(+)(out). Its function is as follows. Produces ATP from ADP in the presence of a proton gradient across the membrane. The catalytic sites are hosted primarily by the beta subunits. This is ATP synthase subunit beta from Lysinibacillus sphaericus (strain C3-41).